A 439-amino-acid chain; its full sequence is Acyl transferase 7 (439 aa).

The interval 1–25 (MAAAAPDKAVERLSQKLVHPSSPTP) is disordered. Residues His-176 and Asp-383 each act as proton acceptor in the active site.

It belongs to the plant acyltransferase family.

Its function is as follows. Involved in the incorporation of ferulate into the cell wall. May act as arabinoxylan feruloyl transferase. The polypeptide is Acyl transferase 7 (Oryza sativa subsp. japonica (Rice)).